Reading from the N-terminus, the 355-residue chain is Glutamyl aminopeptidase (355 aa).

Positions 65 and 181 each coordinate a divalent metal cation. Glu213 acts as the Proton acceptor in catalysis. Positions 214, 236, and 319 each coordinate a divalent metal cation.

Belongs to the peptidase M42 family. Requires a divalent metal cation as cofactor.

It catalyses the reaction Release of N-terminal glutamate (and to a lesser extent aspartate) from a peptide.. The sequence is that of Glutamyl aminopeptidase (pepA) from Lactococcus lactis subsp. cremoris (strain MG1363).